Here is a 117-residue protein sequence, read N- to C-terminus: Large ribosomal subunit protein bL19 (117 aa).

The protein belongs to the bacterial ribosomal protein bL19 family.

Functionally, this protein is located at the 30S-50S ribosomal subunit interface and may play a role in the structure and function of the aminoacyl-tRNA binding site. The sequence is that of Large ribosomal subunit protein bL19 from Shewanella sediminis (strain HAW-EB3).